A 105-amino-acid chain; its full sequence is TPR repeat-containing protein PA0015 (105 aa).

2 TPR repeats span residues 17-50 and 52-84; these read ALLR…DPKY and AGWK…AATH.

The protein is TPR repeat-containing protein PA0015 of Pseudomonas aeruginosa (strain ATCC 15692 / DSM 22644 / CIP 104116 / JCM 14847 / LMG 12228 / 1C / PRS 101 / PAO1).